The sequence spans 1556 residues: Lysine-specific demethylase 5C (1556 aa).

The region spanning 14–55 (CPVFEPSWAEFRDPLGYIAKIRPIAEKSGICKIRPPADWQPP) is the JmjN domain. One can recognise an ARID domain in the interval 79–169 (TRVKLNYLDQ…IVYPYEMYQS (91 aa)). A compositionally biased stretch (polar residues) spans 197-207 (LRQSVQPSKFN). The interval 197 to 227 (LRQSVQPSKFNSYGRRAKRLQPDPEPTEEDI) is disordered. Glycyl lysine isopeptide (Lys-Gly) (interchain with G-Cter in SUMO2) cross-links involve residues Lys205, Lys229, Lys244, and Lys274. A disordered region spans residues 257-303 (LRKKDKEGPECPPTVVVKEESGGDVKVESTSPKTFLESKEELSHSPE). Residues 273–283 (VKEESGGDVKV) show a composition bias toward basic and acidic residues. Residue Ser287 is modified to Phosphoserine. Lys295 participates in a covalent cross-link: Glycyl lysine isopeptide (Lys-Gly) (interchain with G-Cter in SUMO2). Residues Ser301 and Ser317 each carry the phosphoserine modification. The PHD-type 1 zinc finger occupies 324–374 (SYVCRMCSRGDEDDKLLLCDGCDDNYHIFCLLPPLPEIPKGVWRCPKCVMA). One can recognise a JmjC domain in the interval 468–634 (EYATSGWNLN…AGRQCIEHYR (167 aa)). Fe cation contacts are provided by His514, Asp517, and His602. Ser893 and Ser897 each carry phosphoserine. Residue Lys1127 forms a Glycyl lysine isopeptide (Lys-Gly) (interchain with G-Cter in SUMO2) linkage. The PHD-type 2 zinc finger occupies 1185–1250 (TSVCVCGQVP…KFLCPLCMRS (66 aa)). 2 disordered regions span residues 1315-1362 (LQAE…SPEK) and 1441-1556 (ERHG…QQQL). Basic and acidic residues predominate over residues 1335 to 1345 (PLREGSGKDMP). Phosphoserine is present on Ser1359. The segment covering 1445–1460 (SRARGRALERRRRRKV) has biased composition (basic residues). A compositionally biased stretch (basic and acidic residues) spans 1461–1478 (DRGGEGDDPAREELEPKR). Acidic residues predominate over residues 1485–1500 (EAEEAQEEEELEEETG). Composition is skewed to polar residues over residues 1513–1522 (SPSTQENQNG) and 1530–1540 (SGPSAPFSTLS). A compositionally biased stretch (low complexity) spans 1541–1556 (PQLHVPCPQQPPQQQL).

This sequence belongs to the JARID1 histone demethylase family. As to quaternary structure, part of two distinct complexes, one containing E2F6, and the other containing REST. Interacts with ZMYND8. Fe(2+) serves as cofactor.

The protein localises to the nucleus. It carries out the reaction N(6),N(6),N(6)-trimethyl-L-lysyl(4)-[histone H3] + 3 2-oxoglutarate + 3 O2 = L-lysyl(4)-[histone H3] + 3 formaldehyde + 3 succinate + 3 CO2. Its function is as follows. Histone demethylase that specifically demethylates 'Lys-4' of histone H3, thereby playing a central role in histone code. Does not demethylate histone H3 'Lys-9', H3 'Lys-27', H3 'Lys-36', H3 'Lys-79' or H4 'Lys-20'. Demethylates trimethylated and dimethylated but not monomethylated H3 'Lys-4'. Participates in transcriptional repression of neuronal genes by recruiting histone deacetylases and REST at neuron-restrictive silencer elements. Represses the CLOCK-BMAL1 heterodimer-mediated transcriptional activation of the core clock component PER2. This Canis lupus familiaris (Dog) protein is Lysine-specific demethylase 5C (KDM5C).